The sequence spans 1470 residues: Collagen alpha-1(XVII) chain (1470 aa).

Disordered stretches follow at residues 1-155 (MDVT…PSTR), 167-193 (KGSR…GTVE), and 422-452 (SAEN…GGAS). Over 1 to 476 (MDVTKKSKRD…CGSCCSWWKW (476 aa)) the chain is Cytoplasmic. Residues 1–573 (MDVTKKSKRD…MTEQENGNLR (573 aa)) are nonhelical region (NC16). Basic and acidic residues predominate over residues 9–19 (RDGTEVTERIV). The span at 60 to 74 (GSSGYINSSGSIRGN) shows a compositional bias: low complexity. Composition is skewed to polar residues over residues 75–96 (ASTS…SPGS), 111–120 (EGSSSGNSSP), and 170–184 (RSAS…SNTL). The interval 146–231 (RLQSASPSTR…WSSTLPAGSS (86 aa)) is necessary for interaction with DST and for the recruitment of DST to hemidesmosome. Residues 430-452 (RGGGGGRGKGGGAGGGGGGGGAS) show a composition bias toward gly residues. A helical; Signal-anchor for type II membrane protein membrane pass occupies residues 477 to 497 (LLGLLLTWLLLLGLLFGLIAL). Residues 498–1470 (AEEVRKLKAR…RRKRSIAIKP (973 aa)) are Extracellular-facing. At S551 the chain carries Phosphoserine; by CK2. 5 disordered regions span residues 568-873 (ENGN…FLSS), 885-999 (GVDL…SSSG), 1159-1181 (DYRN…NAWS), 1194-1220 (TAGL…GVSA), and 1249-1298 (FIVG…TNGG). The interval 574–1456 (GSPGPKGDMG…KGEKGDKGDQ (883 aa)) is triple-helical region. The span at 597 to 609 (PGIPGPLGHPGPE) shows a compositional bias: pro residues. Low complexity-rich tracts occupy residues 742–755 (EPGA…AGAD) and 781–803 (DPGK…PGRP). The segment covering 827–848 (PGPPGPPGAMGPPGPPGTPGPA) has biased composition (pro residues). Residues 850-873 (PAGLPGQQGPRGEPGLAGDSFLSS) show a composition bias toward low complexity. Composition is skewed to pro residues over residues 891 to 914 (PPGP…PRGP), 940 to 949 (PPGPPGPPGP), 982 to 992 (PPGPPGPPGPP), 1166 to 1175 (PPGPPGPPGM), 1201 to 1215 (PGPP…PRGP), and 1253 to 1262 (PPGPPGPQGP). N1273 is a glycosylation site (N-linked (GlcNAc...) asparagine). Positions 1275 to 1290 (SSNSSARRGTSYSSST) are enriched in low complexity. N1395 is a glycosylation site (N-linked (GlcNAc...) asparagine). The segment at 1406-1470 (TYGTIPGPPG…RRKRSIAIKP (65 aa)) is disordered. Residues 1434–1443 (PRGPPGPPGP) show a composition bias toward pro residues. A compositionally biased stretch (basic and acidic residues) spans 1446–1455 (NKGEKGDKGD). A nonhelical region (NC1) region spans residues 1457 to 1470 (VYTGRRKRSIAIKP). Residues 1460–1470 (GRRKRSIAIKP) show a composition bias toward basic residues.

In terms of assembly, homotrimers of alpha 1(XVII)chains. Interacts (via cytoplasmic region) with ITGB4 (via cytoplasmic region). Interacts (via cytoplasmic region) with DST (via N-terminus). Interacts (via N-terminus) with PLEC. Interacts (via cytoplasmic region) with DSP. The intracellular/endo domain is disulfide-linked. Post-translationally, prolines at the third position of the tripeptide repeating unit (G-X-Y) are hydroxylated in some or all of the chains. In terms of processing, the ectodomain is shedded from the surface of keratinocytes resulting in a 120-kDa soluble form, also named as 120 kDa linear IgA disease antigen homolog. The shedding is mediated by membrane-bound metalloproteases. This cleavage is inhibited by phosphorylation at Ser-551.

The protein localises to the cell junction. Its subcellular location is the hemidesmosome. It is found in the membrane. The protein resides in the secreted. It localises to the extracellular space. The protein localises to the extracellular matrix. Its subcellular location is the basement membrane. Functionally, may play a role in the integrity of hemidesmosome and the attachment of basal keratinocytes to the underlying basement membrane. The 120 kDa linear IgA disease antigen homolog is an anchoring filament component involved in dermal-epidermal cohesion. This chain is Collagen alpha-1(XVII) chain (Col17a1), found in Mus musculus (Mouse).